Reading from the N-terminus, the 103-residue chain is Salivary thrombin inhibitor anophelin (103 aa).

The signal sequence occupies residues 1-21 (MASKLFVLAFLCLALVVVVQS). A disordered region spans residues 24 to 103 (QYARGDVPTY…PAASSSESDE (80 aa)). A blocks exosite I of host thrombin region spans residues 56-68 (EEFDPSLLEEHAD). The tract at residues 74–77 (DPGR) is blocks active site cleft of host thrombin in a reverse direction compared to substrates. Residues 91–103 (ASAPAASSSESDE) are compositionally biased toward low complexity.

This sequence belongs to the anophelin family. In terms of assembly, interacts with human F2 (thrombin); the interaction results in thrombin inhibition. In terms of tissue distribution, female salivary gland (at protein level). Not detected in female midgut, head, carcass and male tissues (at protein level).

It is found in the secreted. Its activity is regulated as follows. Increasing concentration of NaCl decreases affinity for thrombin. Salivary protein with anticoagulant activity that inhibits host thrombin (F2); binds to the proteinase in a reverse orientation (opposite to substrates). The polypeptide is Salivary thrombin inhibitor anophelin (Anopheles gambiae (African malaria mosquito)).